A 343-amino-acid polypeptide reads, in one-letter code: Thioredoxin domain-containing protein 15 (343 aa).

A signal peptide spans 1-20 (MQLLCWWQILLWVLGLPARG). Over 21–304 (LEEDSGHTWQ…GPLPSTLVKT (284 aa)) the chain is Extracellular. Positions 86–95 (EDQRSTEAHD) are enriched in basic and acidic residues. A disordered region spans residues 86–112 (EDQRSTEAHDGTCSAQGDEDPRCGGRE). One can recognise a Thioredoxin domain in the interval 162-279 (ERNVTGLENF…LKIFIFNQTG (118 aa)). N-linked (GlcNAc...) asparagine glycosylation is found at N170, N177, N189, and N276. A helical membrane pass occupies residues 305-325 (VDWLLVFSLFFLISFIMYATI). The Cytoplasmic portion of the chain corresponds to 326–343 (RTESIRWLIPGQEQEHAE).

The protein localises to the cell projection. It localises to the cilium membrane. Its function is as follows. Acts as a positive regulator of ciliary hedgehog signaling. Required for cilia biogenesis. This chain is Thioredoxin domain-containing protein 15 (Txndc15), found in Rattus norvegicus (Rat).